Reading from the N-terminus, the 620-residue chain is 1-deoxy-D-xylulose-5-phosphate synthase (620 aa).

Residues H80 and 121–123 each bind thiamine diphosphate; that span reads GHS. D152 is a Mg(2+) binding site. Residues 153 to 154, N181, Y288, and E370 contribute to the thiamine diphosphate site; that span reads GA. Position 181 (N181) interacts with Mg(2+).

This sequence belongs to the transketolase family. DXPS subfamily. Homodimer. Mg(2+) is required as a cofactor. Requires thiamine diphosphate as cofactor.

It carries out the reaction D-glyceraldehyde 3-phosphate + pyruvate + H(+) = 1-deoxy-D-xylulose 5-phosphate + CO2. It functions in the pathway metabolic intermediate biosynthesis; 1-deoxy-D-xylulose 5-phosphate biosynthesis; 1-deoxy-D-xylulose 5-phosphate from D-glyceraldehyde 3-phosphate and pyruvate: step 1/1. Functionally, catalyzes the acyloin condensation reaction between C atoms 2 and 3 of pyruvate and glyceraldehyde 3-phosphate to yield 1-deoxy-D-xylulose-5-phosphate (DXP). This is 1-deoxy-D-xylulose-5-phosphate synthase from Escherichia coli O127:H6 (strain E2348/69 / EPEC).